The following is a 288-amino-acid chain: MAPLKTSVSDTIDKIDMSLDDIIKLNKQEQNRKQLKGRYNGSFRQFRNSWGRWGAQHTSGAGNNLRSQGLRKRPYGVKTGLAMRKMASWKGISPLNHQPLVRNSPGQLVSFRKRLNPQRSPDSGVKTSSSLQRYYLRSSSYAPTNTFRSGFRMDQQRETRQATFLSRRGLKVQTLMDMDQHLDLPELSKTPPWRTSVSSGGSLTVSIDNPSAVTLPSSLGSRLPRPPFPFLTKKEGSETKVPKGVPLEFDINSVAKQSGITLNERFKILKEQRLAQAFTKGSRFVTVG.

Residues 11–29 carry the UAP56-binding motif motif; it reads TIDKIDMSLDDIIKLNKQE. The tract at residues 183-202 is disordered; sequence DLPELSKTPPWRTSVSSGGS.

Belongs to the UIF family.

It localises to the nucleus. The protein resides in the nucleoplasm. The protein localises to the nucleus speckle. In terms of biological role, required for mRNA export from the nucleus to the cytoplasm. Acts as an adapter that uses the ddx39b/uap56-nfx1 pathway to ensure efficient mRNA export and delivering to the nuclear pore. In Xenopus laevis (African clawed frog), this protein is UAP56-interacting factor (fyttd1).